A 78-amino-acid chain; its full sequence is Defensin-like protein 74 (78 aa).

The signal sequence occupies residues 1–28 (MNYKIGIMSLLVITSIIFLFLVPDKVEA). Intrachain disulfides connect cysteine 32–cysteine 73, cysteine 36–cysteine 58, cysteine 42–cysteine 71, and cysteine 46–cysteine 72.

It belongs to the DEFL family.

It localises to the secreted. The protein is Defensin-like protein 74 (LCR43) of Arabidopsis thaliana (Mouse-ear cress).